A 674-amino-acid chain; its full sequence is Protein kinase C delta type (674 aa).

The C2 domain maps to 1 to 106 (MAPFLRISFN…KNNGKAEFWL (106 aa)). Phosphothreonine occurs at positions 43 and 50. A Phosphotyrosine modification is found at Tyr64. Position 130 is a phosphoserine (Ser130). Thr141 is modified (phosphothreonine). Tyr155 carries the post-translational modification Phosphotyrosine. Residues 158–208 (NHEFIATFFGQPTFCSVCKEFVWGLNKQGYKCRQCNAAIHKKCIDKIIGRC) form a Phorbol-ester/DAG-type 1 zinc finger. The residue at position 218 (Thr218) is a Phosphothreonine. Residues 230–280 (PHRFKVYNYMSPTFCDHCGSLLWGLVKQGLKCEDCGMNVHHKCREKVANLC) form a Phorbol-ester/DAG-type 2 zinc finger. Residue Ser299 is modified to Phosphoserine; by autocatalysis. Phosphotyrosine; by SRC is present on residues Tyr311 and Tyr332. Residues 347–601 (FTFQKVLGKG…TGNIRIHPFF (255 aa)) enclose the Protein kinase domain. Residue 353 to 361 (LGKGSFGKV) coordinates ATP. At Tyr372 the chain carries Phosphotyrosine. Residue Lys376 participates in ATP binding. Thr449 bears the Phosphothreonine mark. Catalysis depends on Asp471, which acts as the Proton acceptor. Ser504 carries the phosphoserine modification. Phosphothreonine; by autocatalysis is present on Thr505. A Phosphotyrosine modification is found at Tyr565. Residues 602 to 673 (KTINWSLLEK…VNPKFEQFLD (72 aa)) form the AGC-kinase C-terminal domain. A phosphoserine mark is found at Ser643, Ser652, and Ser662.

Belongs to the protein kinase superfamily. AGC Ser/Thr protein kinase family. PKC subfamily. In terms of assembly, interacts with PDPK1 (via N-terminal region). Interacts with RAD9A. Interacts with CDCP1. Interacts with MUC1. Interacts with VASP. Interacts with CAVIN3. Interacts with PRKD2 (via N-terminus and zing-finger domain 1 and 2) in response to oxidative stress; the interaction is independent of PRKD2 tyrosine phosphorylation. Interacts with PLSC3; interaction is enhanced by UV irradiation. Post-translationally, autophosphorylated and/or phosphorylated at Thr-505, within the activation loop; phosphorylation at Thr-505 is not a prerequisite for enzymatic activity. Autophosphorylated at Ser-299. Upon TNFSF10/TRAIL treatment, phosphorylated at Tyr-155; phosphorylation is required for its translocation to the endoplasmic reticulum and cleavage by caspase-3. Phosphorylated at Tyr-311, Tyr-332 and Tyr-565; phosphorylation of Tyr-311 and Tyr-565 following thrombin or zymosan stimulation potentiates its kinase activity. Phosphorylated by protein kinase PDPK1; phosphorylation is inhibited by the apoptotic C-terminal cleavage product of PKN2. Phosphorylated at Tyr-311 through a SYK and SRC mechanism downstream of C-type lectin receptors activation, promoting its activation. In terms of processing, proteolytically cleaved into a catalytic subunit and a regulatory subunit by caspase-3 during apoptosis which results in kinase activation. Isoform 1 is highly expressed in developing pro- and pre-B-cells and moderately in mature T-cells. Isoform 2 is highly expressed in testis and ovary and at a lower level in thymocytes, brain and kidney.

It is found in the cytoplasm. Its subcellular location is the perinuclear region. The protein resides in the nucleus. It localises to the cell membrane. The protein localises to the mitochondrion. It is found in the endomembrane system. The enzyme catalyses L-seryl-[protein] + ATP = O-phospho-L-seryl-[protein] + ADP + H(+). The catalysed reaction is L-threonyl-[protein] + ATP = O-phospho-L-threonyl-[protein] + ADP + H(+). It catalyses the reaction L-tyrosyl-[protein] + ATP = O-phospho-L-tyrosyl-[protein] + ADP + H(+). Its activity is regulated as follows. Novel PKCs (PRKCD, PRKCE, PRKCH and PRKCQ) are calcium-insensitive, but activated by diacylglycerol (DAG) and phosphatidylserine. Three specific sites; Thr-505 (activation loop of the kinase domain), Ser-643 (turn motif) and Ser-662 (hydrophobic region), need to be phosphorylated for its full activation. Activated by caspase-3 (CASP3) cleavage during apoptosis. After cleavage, the pseudosubstrate motif in the regulatory subunit is released from the substrate recognition site of the catalytic subunit, which enables PRKCD to become constitutively activated. The catalytic subunit which displays properties of a sphingosine-dependent protein kinase is activated by D-erythro-sphingosine (Sph) or N,N-dimethyl-D-erythrosphingosine (DMS) or N,N,N-trimethyl-D-erythrosphingosine (TMS), but not by ceramide or Sph-1-P and is strongly inhibited by phosphatidylserine. In terms of biological role, calcium-independent, phospholipid- and diacylglycerol (DAG)-dependent serine/threonine-protein kinase that plays contrasting roles in cell death and cell survival by functioning as a pro-apoptotic protein during DNA damage-induced apoptosis, but acting as an anti-apoptotic protein during cytokine receptor-initiated cell death, is involved in tumor suppression, is required for oxygen radical production by NADPH oxidase and acts as a positive or negative regulator in platelet functional responses. Negatively regulates B cell proliferation and also has an important function in self-antigen induced B cell tolerance induction. Upon DNA damage, activates the promoter of the death-promoting transcription factor BCLAF1/Btf to trigger BCLAF1-mediated p53/TP53 gene transcription and apoptosis. In response to oxidative stress, interact with and activate CHUK/IKKA in the nucleus, causing the phosphorylation of p53/TP53. In the case of ER stress or DNA damage-induced apoptosis, can form a complex with the tyrosine-protein kinase ABL1 which trigger apoptosis independently of p53/TP53. In cytosol can trigger apoptosis by activating MAPK11 or MAPK14, inhibiting AKT1 and decreasing the level of X-linked inhibitor of apoptosis protein (XIAP), whereas in nucleus induces apoptosis via the activation of MAPK8 or MAPK9. Upon ionizing radiation treatment, is required for the activation of the apoptosis regulators BAX and BAK, which trigger the mitochondrial cell death pathway. Can phosphorylate MCL1 and target it for degradation which is sufficient to trigger for BAX activation and apoptosis. Is required for the control of cell cycle progression both at G1/S and G2/M phases. Mediates phorbol 12-myristate 13-acetate (PMA)-induced inhibition of cell cycle progression at G1/S phase by up-regulating the CDK inhibitor CDKN1A/p21 and inhibiting the cyclin CCNA2 promoter activity. In response to UV irradiation can phosphorylate CDK1, which is important for the G2/M DNA damage checkpoint activation. Can protect glioma cells from the apoptosis induced by TNFSF10/TRAIL, probably by inducing increased phosphorylation and subsequent activation of AKT1. Can also act as tumor suppressor upon mitogenic stimulation with PMA or TPA. In N-formyl-methionyl-leucyl-phenylalanine (fMLP)-treated cells, is required for NCF1 (p47-phox) phosphorylation and activation of NADPH oxidase activity, and regulates TNF-elicited superoxide anion production in neutrophils, by direct phosphorylation and activation of NCF1 or indirectly through MAPK1/3 (ERK1/2) signaling pathways. Involved in antifungal immunity by mediating phosphorylation and activation of CARD9 downstream of C-type lectin receptors activation, promoting interaction between CARD9 and BCL10, followed by activation of NF-kappa-B and MAP kinase p38 pathways. May also play a role in the regulation of NADPH oxidase activity in eosinophil after stimulation with IL5, leukotriene B4 or PMA. In collagen-induced platelet aggregation, acts a negative regulator of filopodia formation and actin polymerization by interacting with and negatively regulating VASP phosphorylation. Downstream of PAR1, PAR4 and CD36/GP4 receptors, regulates differentially platelet dense granule secretion; acts as a positive regulator in PAR-mediated granule secretion, whereas it negatively regulates CD36/GP4-mediated granule release. Phosphorylates MUC1 in the C-terminal and regulates the interaction between MUC1 and beta-catenin. The catalytic subunit phosphorylates 14-3-3 proteins (YWHAB, YWHAZ and YWHAH) in a sphingosine-dependent fashion. Phosphorylates ELAVL1 in response to angiotensin-2 treatment. Phosphorylates mitochondrial phospholipid scramblase 3 (PLSCR3), resulting in increased cardiolipin expression on the mitochondrial outer membrane which facilitates apoptosis. Phosphorylates SMPD1 which induces SMPD1 secretion. The chain is Protein kinase C delta type from Mus musculus (Mouse).